The following is a 178-amino-acid chain: Ribosome maturation factor RimM (178 aa).

The region spanning 95-174 (EGQHFWFNVI…IVHVKDAKDI (80 aa)) is the PRC barrel domain.

The protein belongs to the RimM family. As to quaternary structure, binds ribosomal protein uS19.

It localises to the cytoplasm. In terms of biological role, an accessory protein needed during the final step in the assembly of 30S ribosomal subunit, possibly for assembly of the head region. Essential for efficient processing of 16S rRNA. May be needed both before and after RbfA during the maturation of 16S rRNA. It has affinity for free ribosomal 30S subunits but not for 70S ribosomes. The polypeptide is Ribosome maturation factor RimM (Sulfurovum sp. (strain NBC37-1)).